Here is a 579-residue protein sequence, read N- to C-terminus: Peptidoglycan D,D-transpeptidase FtsI (579 aa).

Residues 15-35 (FCVIVGLLLAMVGAIVWRIVD) traverse the membrane as a helical segment. The active-site Acyl-ester intermediate is the Ser-294. The disordered stretch occupies residues 558-579 (DNLPTATEQQQVNAAPAKGGRG). The span at 561–570 (PTATEQQQVN) shows a compositional bias: polar residues.

Belongs to the transpeptidase family. FtsI subfamily.

The protein resides in the cell inner membrane. It carries out the reaction Preferential cleavage: (Ac)2-L-Lys-D-Ala-|-D-Ala. Also transpeptidation of peptidyl-alanyl moieties that are N-acyl substituents of D-alanine.. The protein operates within cell wall biogenesis; peptidoglycan biosynthesis. In terms of biological role, catalyzes cross-linking of the peptidoglycan cell wall at the division septum. Binds penicillin. The polypeptide is Peptidoglycan D,D-transpeptidase FtsI (Pseudomonas aeruginosa (strain ATCC 15692 / DSM 22644 / CIP 104116 / JCM 14847 / LMG 12228 / 1C / PRS 101 / PAO1)).